The following is a 197-amino-acid chain: MTQPIQLIVGLGNPGPEYANTRHNAGAWYVASLAERYNGSLREDPKYFGLTGRIQINGQDVRLLIPTTFMNLSGKSVVALAKFFQIPPESILVAHDELDLPPGVAKFKQGGGHGGHNGLKDIINKLGNNNQFHRLRLGIGHPGTKEQVVGFVLTKAPKAEQQLIDDALDEAVRATDILFTNDMTKAMNRLHSFKATA.

Y18 serves as a coordination point for tRNA. H23 (proton acceptor) is an active-site residue. The tRNA site is built by F69, N71, and N117.

Belongs to the PTH family. Monomer.

Its subcellular location is the cytoplasm. It carries out the reaction an N-acyl-L-alpha-aminoacyl-tRNA + H2O = an N-acyl-L-amino acid + a tRNA + H(+). Hydrolyzes ribosome-free peptidyl-tRNAs (with 1 or more amino acids incorporated), which drop off the ribosome during protein synthesis, or as a result of ribosome stalling. In terms of biological role, catalyzes the release of premature peptidyl moieties from peptidyl-tRNA molecules trapped in stalled 50S ribosomal subunits, and thus maintains levels of free tRNAs and 50S ribosomes. The chain is Peptidyl-tRNA hydrolase from Tolumonas auensis (strain DSM 9187 / NBRC 110442 / TA 4).